Reading from the N-terminus, the 395-residue chain is Flagellin D (395 aa).

The protein belongs to the bacterial flagellin family.

The protein localises to the secreted. It is found in the bacterial flagellum. Flagellin is the subunit protein which polymerizes to form the filaments of bacterial flagella. This Rhizobium meliloti (Ensifer meliloti) protein is Flagellin D (flaD).